The chain runs to 521 residues: Myocyte-specific enhancer factor 2D (521 aa).

Residues 3–57 enclose the MADS-box domain; sequence RKKIQIQRITDERNRQVTFTKRKFGLMKKAYELSVLCDCEIALIIFNHSNKLFQY. The segment at residues 58 to 86 is a DNA-binding region (mef2-type); it reads ASTDMDKVLLKYTEYNEPHESRTNADIIE. S98, S106, and S110 each carry phosphoserine. The residue at position 121 (S121) is a Phosphoserine; by PKA. Residues 174 to 207 are disordered; sequence TDPRLLSPQQPALQRNSVSPGLPQRPASAGAMLG. S180 carries the phosphoserine; by MAPK7 modification. The segment covering 180 to 192 has biased composition (polar residues); the sequence is SPQQPALQRNSVS. Position 190 is a phosphoserine; by PKA (S190). Residue S231 is modified to Phosphoserine. The interval 244 to 266 is disordered; sequence NKVIPAKSPPPPTHSTQLGAPSR. At K245 the chain carries N6-acetyllysine. S251 is subject to Phosphoserine. The segment at 286-292 is beta domain; sequence TEDHLDL. Disordered regions lie at residues 357-407 and 437-521; these read SLGN…QSHL and SIKS…WTLK. Over residues 373–400 the composition is skewed to pro residues; the sequence is PQQPQPPQQQPPQPQQPQPQQPQQPQQP. Residue K439 is modified to N6-acetyllysine; alternate. Residue K439 forms a Glycyl lysine isopeptide (Lys-Gly) (interchain with G-Cter in SUMO); alternate linkage. S444 bears the Phosphoserine mark.

The protein belongs to the MEF2 family. In terms of assembly, interacts with MYOG. Forms a complex with class II HDACs in undifferentiating cells. On myogenic differentiation, HDACs are released into the cytoplasm allowing MEF2s to interact with other proteins for activation. Interacts with HDAC4 (in undifferentiating cells); the interaction translocates MEF2D to nuclear dots. Forms a heterodimer with MEF2A. Interacts with MAPK7; the interaction phosphorylates but does not activate MEF2D. Interacts with CCAR2 and HDAC3. In terms of processing, phosphorylated on Ser-444 by CDK5 is required for Lys-439 sumoylation and inhibits transcriptional activity. In neurons, enhanced CDK5 activity induced by neurotoxins promotes caspase 3-mediated cleavage leading to neuron apoptosis. Phosphorylation on Ser-180 can be enhanced by EGF. Phosphorylated and activated by CaMK4. Post-translationally, acetylated on Lys-439 by CREBBP. Acetylated by EP300. Deacetylated by SIRT1 and HDAC3. Sumoylated on Lys-439 with SUMO2 but not SUMO1; which inhibits transcriptional activity and myogenic activity. Desumoylated by SENP3. In terms of processing, proteolytically cleaved in cerebellar granule neurons on several sites by caspase 7 following neurotoxicity. Preferentially cleaves the CDK5-mediated hyperphosphorylated form which leads to neuron apoptosis and transcriptional inactivation.

It localises to the nucleus. Its function is as follows. Transcriptional activator which binds specifically to the MEF2 element, 5'-YTA[AT](4)TAR-3', found in numerous muscle-specific, growth factor- and stress-induced genes. Mediates cellular functions not only in skeletal and cardiac muscle development, but also in neuronal differentiation and survival. Plays diverse roles in the control of cell growth, survival and apoptosis via p38 MAPK signaling in muscle-specific and/or growth factor-related transcription. Plays a critical role in the regulation of neuronal apoptosis. The sequence is that of Myocyte-specific enhancer factor 2D (MEF2D) from Homo sapiens (Human).